The primary structure comprises 709 residues: D-(-)-3-hydroxybutyrate oligomer hydrolase (709 aa).

Residues 1-26 form the signal peptide; it reads MTVFKTAPLLIAALAASSCGGGGSGA. Residues 58–77 form a disordered region; it reads GLGRSGLQDDSPPGYAGSQP. Residue Ser-305 is the Charge relay system of the active site.

The protein belongs to the D-(-)-3-hydroxybutyrate oligomer hydrolase family.

The protein resides in the secreted. It catalyses the reaction (3R)-hydroxybutanoate dimer + H2O = 2 (R)-3-hydroxybutanoate + H(+). It participates in lipid metabolism; butanoate metabolism. Participates in the degradation of poly-3-hydroxybutyrate (PHB). It works downstream of poly(3-hydroxybutyrate) depolymerase, hydrolyzing D(-)-3-hydroxybutyrate oligomers of various length (3HB-oligomers) into 3HB-monomers. In Paracidovorax citrulli (strain AAC00-1) (Acidovorax citrulli), this protein is D-(-)-3-hydroxybutyrate oligomer hydrolase.